We begin with the raw amino-acid sequence, 225 residues long: ATP-dependent dethiobiotin synthetase BioD (225 aa).

Glu12–Tyr17 is an ATP binding site. Residue Thr16 coordinates Mg(2+). Residue Lys37 is part of the active site. A substrate-binding site is contributed by Ser41. ATP contacts are provided by residues Asp52, Glu114 to Gly117, and Asn174 to Cys175. Mg(2+) is bound by residues Asp52 and Glu114.

Belongs to the dethiobiotin synthetase family. Homodimer. Requires Mg(2+) as cofactor.

The protein localises to the cytoplasm. The catalysed reaction is (7R,8S)-7,8-diammoniononanoate + CO2 + ATP = (4R,5S)-dethiobiotin + ADP + phosphate + 3 H(+). It participates in cofactor biosynthesis; biotin biosynthesis; biotin from 7,8-diaminononanoate: step 1/2. Its function is as follows. Catalyzes a mechanistically unusual reaction, the ATP-dependent insertion of CO2 between the N7 and N8 nitrogen atoms of 7,8-diaminopelargonic acid (DAPA, also called 7,8-diammoniononanoate) to form a ureido ring. This chain is ATP-dependent dethiobiotin synthetase BioD, found in Francisella tularensis subsp. mediasiatica (strain FSC147).